The sequence spans 123 residues: Integration host factor subunit alpha (123 aa).

The interval 97-123 is disordered; sequence NANGTASSMSSSANAAAGDKSESASGT. Over residues 102-113 the composition is skewed to low complexity; that stretch reads ASSMSSSANAAA.

The protein belongs to the bacterial histone-like protein family. Heterodimer of an alpha and a beta chain.

In terms of biological role, this protein is one of the two subunits of integration host factor, a specific DNA-binding protein that functions in genetic recombination as well as in transcriptional and translational control. This is Integration host factor subunit alpha from Rhodopseudomonas palustris (strain HaA2).